A 179-amino-acid polypeptide reads, in one-letter code: Large ribosomal subunit protein uL5 (179 aa).

This sequence belongs to the universal ribosomal protein uL5 family. As to quaternary structure, part of the 50S ribosomal subunit; part of the 5S rRNA/L5/L18/L25 subcomplex. Contacts the 5S rRNA and the P site tRNA. Forms a bridge to the 30S subunit in the 70S ribosome.

In terms of biological role, this is one of the proteins that bind and probably mediate the attachment of the 5S RNA into the large ribosomal subunit, where it forms part of the central protuberance. In the 70S ribosome it contacts protein S13 of the 30S subunit (bridge B1b), connecting the 2 subunits; this bridge is implicated in subunit movement. Contacts the P site tRNA; the 5S rRNA and some of its associated proteins might help stabilize positioning of ribosome-bound tRNAs. This Staphylococcus aureus (strain MW2) protein is Large ribosomal subunit protein uL5.